A 246-amino-acid chain; its full sequence is Glutamate/aspartate import permease protein GltJ (246 aa).

The ABC transmembrane type-1 domain occupies 29 to 230 (FQVTIALSIC…LINAFIMLVM (202 aa)). 5 helical membrane-spanning segments follow: residues 33–53 (IALS…FGIL), 74–94 (NVPL…LLPE), 104–124 (LDPN…FTAA), 179–196 (LVKN…DMAA), and 212–232 (FTAI…VMTL).

This sequence belongs to the binding-protein-dependent transport system permease family. HisMQ subfamily. As to quaternary structure, the complex is composed of two ATP-binding proteins (GltL), two transmembrane proteins (GltJ and GltK) and a solute-binding protein (GltI).

The protein localises to the cell inner membrane. Part of the ABC transporter complex GltIJKL involved in glutamate and aspartate uptake. Probably responsible for the translocation of the substrate across the membrane. This Escherichia coli O6:H1 (strain CFT073 / ATCC 700928 / UPEC) protein is Glutamate/aspartate import permease protein GltJ (gltJ).